A 551-amino-acid chain; its full sequence is Meiotically up-regulated gene 184 protein (551 aa).

In terms of domain architecture, J spans 12-78 (DYYAILKLQK…TKRLIYDQLF (67 aa)). Residues 85 to 122 (RSQYKPNSTSNPSKHTSAYASYNKGKNSKWSSPFASTT) show a composition bias toward polar residues. Disordered regions lie at residues 85-153 (RSQY…FPRD), 176-226 (RQEP…SVYK), and 334-359 (EAESSNPFSFDFGSSGPKSRSDTRNN). Basic and acidic residues predominate over residues 124–133 (KPQESSEKYS). The segment covering 134 to 146 (KKSSTRKKEHFNK) has biased composition (basic residues). Basic and acidic residues-rich tracts occupy residues 176–187 (RQEPESLKKENN) and 203–219 (GPKDSSKHPSNDGKIPE).

The protein localises to the cytoplasm. It is found in the cytoskeleton. Its function is as follows. Has a role in sporulation. The polypeptide is Meiotically up-regulated gene 184 protein (mug184) (Schizosaccharomyces pombe (strain 972 / ATCC 24843) (Fission yeast)).